The following is a 510-amino-acid chain: Arginine biosynthesis bifunctional protein ArgJ, mitochondrial (510 aa).

A compositionally biased stretch (polar residues) spans 57–70 (TSTNEPSAATTNVP). Residues 57-76 (TSTNEPSAATTNVPHPQEAP) form a disordered region. Thr222, Lys248, Thr267, and Glu364 together coordinate substrate. Thr267 serves as the catalytic Nucleophile.

Belongs to the ArgJ family. As to quaternary structure, heterodimer of an alpha and a beta chain. The alpha and beta chains are autoproteolytically processed from a single precursor protein within the mitochondrion.

It is found in the mitochondrion matrix. It catalyses the reaction N(2)-acetyl-L-ornithine + L-glutamate = N-acetyl-L-glutamate + L-ornithine. It carries out the reaction L-glutamate + acetyl-CoA = N-acetyl-L-glutamate + CoA + H(+). It participates in amino-acid biosynthesis; L-arginine biosynthesis; L-ornithine and N-acetyl-L-glutamate from L-glutamate and N(2)-acetyl-L-ornithine (cyclic): step 1/1. The protein operates within amino-acid biosynthesis; L-arginine biosynthesis; N(2)-acetyl-L-ornithine from L-glutamate: step 1/4. Catalyzes two activities which are involved in the cyclic version of arginine biosynthesis: the synthesis of acetylglutamate from glutamate and acetyl-CoA, and of ornithine by transacetylation between acetylornithine and glutamate. The polypeptide is Arginine biosynthesis bifunctional protein ArgJ, mitochondrial (Malassezia globosa (strain ATCC MYA-4612 / CBS 7966) (Dandruff-associated fungus)).